Reading from the N-terminus, the 261-residue chain is Malonyl-[acyl-carrier protein] O-methyltransferase (261 aa).

Belongs to the methyltransferase superfamily.

The catalysed reaction is malonyl-[ACP] + S-adenosyl-L-methionine = malonyl-[ACP] methyl ester + S-adenosyl-L-homocysteine. It participates in cofactor biosynthesis; biotin biosynthesis. Its function is as follows. Converts the free carboxyl group of a malonyl-thioester to its methyl ester by transfer of a methyl group from S-adenosyl-L-methionine (SAM). It allows to synthesize pimeloyl-ACP via the fatty acid synthetic pathway. The polypeptide is Malonyl-[acyl-carrier protein] O-methyltransferase (Bacteroides thetaiotaomicron (strain ATCC 29148 / DSM 2079 / JCM 5827 / CCUG 10774 / NCTC 10582 / VPI-5482 / E50)).